We begin with the raw amino-acid sequence, 834 residues long: Leucine--tRNA ligase (834 aa).

A 'HIGH' region motif is present at residues 40–50 (PYPSGNIHMGH). Residues 586-590 (KMSKS) carry the 'KMSKS' region motif. Residue Lys589 participates in ATP binding.

This sequence belongs to the class-I aminoacyl-tRNA synthetase family.

It is found in the cytoplasm. The enzyme catalyses tRNA(Leu) + L-leucine + ATP = L-leucyl-tRNA(Leu) + AMP + diphosphate. The sequence is that of Leucine--tRNA ligase from Nitratidesulfovibrio vulgaris (strain DSM 19637 / Miyazaki F) (Desulfovibrio vulgaris).